The chain runs to 152 residues: SsrA-binding protein (152 aa).

The segment at 124-152 (KKLHDKRDTAAERDWQRDKARLMKGDRGD) is disordered. Residues 128 to 152 (DKRDTAAERDWQRDKARLMKGDRGD) are compositionally biased toward basic and acidic residues.

It belongs to the SmpB family.

The protein localises to the cytoplasm. In terms of biological role, required for rescue of stalled ribosomes mediated by trans-translation. Binds to transfer-messenger RNA (tmRNA), required for stable association of tmRNA with ribosomes. tmRNA and SmpB together mimic tRNA shape, replacing the anticodon stem-loop with SmpB. tmRNA is encoded by the ssrA gene; the 2 termini fold to resemble tRNA(Ala) and it encodes a 'tag peptide', a short internal open reading frame. During trans-translation Ala-aminoacylated tmRNA acts like a tRNA, entering the A-site of stalled ribosomes, displacing the stalled mRNA. The ribosome then switches to translate the ORF on the tmRNA; the nascent peptide is terminated with the 'tag peptide' encoded by the tmRNA and targeted for degradation. The ribosome is freed to recommence translation, which seems to be the essential function of trans-translation. The protein is SsrA-binding protein of Caulobacter vibrioides (strain ATCC 19089 / CIP 103742 / CB 15) (Caulobacter crescentus).